Reading from the N-terminus, the 514-residue chain is Synaptic vesicular amine transporter (514 aa).

Over 1–20 the chain is Cytoplasmic; that stretch reads MALSELALVRWLQESRRSRK. The helical transmembrane segment at 21-41 threads the bilayer; the sequence is LILFIVFLALLLDNMLLTVVV. Topologically, residues 42-129 are lumenal, vesicle; sequence PIIPSYLYSI…EDKDLLNENV (88 aa). N-linked (GlcNAc...) asparagine glycans are attached at residues Asn-84 and Asn-91. Cys-117 and Cys-324 are disulfide-bonded. Residues 130 to 150 traverse the membrane as a helical segment; that stretch reads QVGLLFASKATVQLITNPFIG. At 151–159 the chain is on the cytoplasmic side; that stretch reads LLTNRIGYP. Residues 160–180 traverse the membrane as a helical segment; it reads IPIFAGFCIMFVSTIMFAFSS. Residues 181–189 lie on the Lumenal, vesicle side of the membrane; that stretch reads SYAFLLIAR. Residues 190–210 traverse the membrane as a helical segment; it reads SLQGIGSSCSSVAGMGMLASV. The Cytoplasmic portion of the chain corresponds to 211–219; that stretch reads YTDDEERGN. The helical transmembrane segment at 220-242 threads the bilayer; it reads VMGIALGGLAMGVLVGPPFGSVL. Leu-228 and Val-232 together coordinate serotonin. The Lumenal, vesicle segment spans residues 243 to 248; that stretch reads YEFVGK. A helical membrane pass occupies residues 249–271; the sequence is TAPFLVLAALVLLDGAIQLFVLQ. Over 272-291 the chain is Cytoplasmic; it reads PSRVQPESQKGTPLTTLLKD. The chain crosses the membrane as a helical span at residues 292–311; that stretch reads PYILIAAGSICFANMGIAML. Serotonin contacts are provided by Asn-305, Ile-308, Glu-312, Phe-334, and Tyr-341. Topologically, residues 312 to 328 are lumenal, vesicle; the sequence is EPALPIWMMETMCSRKW. Residues 329–352 form a helical membrane-spanning segment; the sequence is QLGVAFLPASISYLIGTNIFGILA. The Cytoplasmic segment spans residues 353-357; the sequence is HKMGR. A helical transmembrane segment spans residues 358–378; that stretch reads WLCALLGMIIVGVSILCIPFA. Residues 379 to 389 lie on the Lumenal, vesicle side of the membrane; sequence KNIYGLIAPNF. Residues 390-410 form a helical membrane-spanning segment; sequence GVGFAIGMVDSSMMPIMGYLV. Asp-399 provides a ligand contact to serotonin. Residues 411–414 are Cytoplasmic-facing; the sequence is DLRH. The chain crosses the membrane as a helical span at residues 415-435; that stretch reads VSVYGSVYAIADVAFCMGYAI. Tyr-433 is a binding site for serotonin. The Lumenal, vesicle segment spans residues 436–440; it reads GPSAG. The helical transmembrane segment at 441–462 threads the bilayer; the sequence is GAIAKAIGFPWLMTIIGIIDIL. The Cytoplasmic portion of the chain corresponds to 463-514; sequence FAPLCFFLRSPPAKEEKMAILMDHNCPIKTKMYTQNNIQSYPIGEDEESESD. Residues Ser-511 and Ser-513 each carry the phosphoserine modification.

Belongs to the major facilitator superfamily. Vesicular transporter family. As to quaternary structure, interacts with SLC6A3. Expressed in neuronal and neuroendocrine tissues. Detected in central and peripheral nervous system in particular in axonal and dendritic processes in dopaminergic cells of substantia nigra, histaminergic neuronal cell bodies of substantia nigra and tuberomammillary nucleus, in ganglion cells of sympathetic glia and in peripheral sympathetic nerve terminals in stomach and duodenum (at protein level). Highly expressed in chromaffin cells of the adrenal medulla and histamine-storing enterochromaffin-like cells of oxyntic mucosa (at protein level).

The protein resides in the cytoplasmic vesicle. The protein localises to the secretory vesicle. Its subcellular location is the synaptic vesicle membrane. It localises to the secretory vesicle membrane. It is found in the cell projection. The protein resides in the axon. The protein localises to the dendrite. It carries out the reaction serotonin(in) + 2 H(+)(out) = serotonin(out) + 2 H(+)(in). It catalyses the reaction dopamine(in) + 2 H(+)(out) = dopamine(out) + 2 H(+)(in). The catalysed reaction is histamine(in) + 2 H(+)(out) = histamine(out) + 2 H(+)(in). Its activity is regulated as follows. Strongly inhibited by reserpine and tetrabenazine. Also inhibited to a lesser extent by ketanserin and fenfluramine. Reserpine and ketanserin inhibit by blocking the substrate-binding pocket. Tetrabenazine traps SLC18A2/VMAT2 in an occluded conformation and its inhibition is specific to SLC18A2/VMAT2 but not SLC18A1/VMAT1. Electrogenic antiporter that exchanges one cationic monoamine with two intravesicular protons across the membrane of secretory and synaptic vesicles. Uses the electrochemical proton gradient established by the V-type proton-pump ATPase to accumulate high concentrations of monoamines inside the vesicles prior to their release via exocytosis. Transports a variety of catecholamines such as dopamine, adrenaline and noradrenaline, histamine, and indolamines such as serotonin. Regulates the transvesicular monoaminergic gradient that determines the quantal size. Mediates somatodendritic dopamine release in hippocampal neurons, likely as part of a regulated secretory pathway that integrates retrograde synaptic signals. Acts as a primary transporter for striatal dopamine loading ensuring impulse-dependent release of dopamine at the synaptic cleft. Responsible for histamine and serotonin storage and subsequent corelease from mast cell granules. The protein is Synaptic vesicular amine transporter (SLC18A2) of Homo sapiens (Human).